The following is a 155-amino-acid chain: MPHPLLPDLETLATKVAASKGFALCGIQLLTHMSPMTLEVQIRHSSGADVSLDDCAGFSGVLGDALEASTLLTDAYVLEISSPGIGDQLSSDRDFETFRGFPVEVHHRDKDDSEQRLEGLLLERDADTLQINIRGRIKRIARDCVIGVRLTSPGS.

The protein belongs to the RimP family.

Its subcellular location is the cytoplasm. Required for maturation of 30S ribosomal subunits. The protein is Ribosome maturation factor RimP of Synechococcus sp. (strain CC9605).